The primary structure comprises 97 residues: Nucleoid-associated protein HPAG1_0033 (97 aa).

It belongs to the YbaB/EbfC family. Homodimer.

The protein localises to the cytoplasm. The protein resides in the nucleoid. Functionally, binds to DNA and alters its conformation. May be involved in regulation of gene expression, nucleoid organization and DNA protection. The chain is Nucleoid-associated protein HPAG1_0033 from Helicobacter pylori (strain HPAG1).